Reading from the N-terminus, the 1235-residue chain is Ubiquitin carboxyl-terminal hydrolase 40 (1235 aa).

Residues 41–482 (SGIRNQGGTC…SAYMLFYRKS (442 aa)) enclose the USP domain. Cysteine 50 serves as the catalytic Nucleophile. Catalysis depends on histidine 305, which acts as the Proton acceptor. Positions 1180–1190 (IRDDTGKEKQK) are enriched in basic and acidic residues. The interval 1180–1235 (IRDDTGKEKQKQRALGRRKSQEALHEQSSYILSSAETPARPRAPETSLSIHVGSFR) is disordered. A compositionally biased stretch (polar residues) spans 1205–1215 (EQSSYILSSAE).

The protein belongs to the peptidase C19 family. Broadly expressed.

The catalysed reaction is Thiol-dependent hydrolysis of ester, thioester, amide, peptide and isopeptide bonds formed by the C-terminal Gly of ubiquitin (a 76-residue protein attached to proteins as an intracellular targeting signal).. In terms of biological role, may be catalytically inactive. This is Ubiquitin carboxyl-terminal hydrolase 40 (USP40) from Homo sapiens (Human).